The primary structure comprises 200 residues: V-type proton ATPase subunit E (200 aa).

The protein belongs to the V-ATPase E subunit family.

Its function is as follows. Produces ATP from ADP in the presence of a proton gradient across the membrane. The protein is V-type proton ATPase subunit E of Thermoanaerobacter pseudethanolicus (strain ATCC 33223 / 39E) (Clostridium thermohydrosulfuricum).